A 248-amino-acid polypeptide reads, in one-letter code: Probable transcriptional regulatory protein PsycPRwf_1013 (248 aa).

It belongs to the TACO1 family.

Its subcellular location is the cytoplasm. The chain is Probable transcriptional regulatory protein PsycPRwf_1013 from Psychrobacter sp. (strain PRwf-1).